The sequence spans 664 residues: Chaperone protein DnaK (664 aa).

Thr-201 carries the phosphothreonine; by autocatalysis modification. Disordered regions lie at residues 516-538 (DAEKHKEEDKKRREASDARNEAD) and 578-664 (APVE…KPND). The span at 578 to 592 (APVEKIKDASEELSR) shows a compositional bias: basic and acidic residues. Low complexity-rich tracts occupy residues 600–617 (AMQSQSASAAASSAANAQ) and 638–649 (AGNSASSNSNNE).

This sequence belongs to the heat shock protein 70 family.

Its function is as follows. Acts as a chaperone. In Chlamydia caviae (strain ATCC VR-813 / DSM 19441 / 03DC25 / GPIC) (Chlamydophila caviae), this protein is Chaperone protein DnaK.